Consider the following 217-residue polypeptide: Uracil-DNA glycosylase (217 aa).

D62 functions as the Proton acceptor in the catalytic mechanism.

The protein belongs to the uracil-DNA glycosylase (UDG) superfamily. UNG family.

It is found in the cytoplasm. The catalysed reaction is Hydrolyzes single-stranded DNA or mismatched double-stranded DNA and polynucleotides, releasing free uracil.. Functionally, excises uracil residues from the DNA which can arise as a result of misincorporation of dUMP residues by DNA polymerase or due to deamination of cytosine. This Streptococcus sanguinis (strain SK36) protein is Uracil-DNA glycosylase.